The primary structure comprises 516 residues: Cytochrome P450 1A2 (516 aa).

The O-linked (GlcNAc) serine glycan is linked to Ser69. Phe226 is a substrate binding site. Residue Cys458 participates in heme binding.

The protein belongs to the cytochrome P450 family. In terms of assembly, interacts with PGRMC1; the interaction requires PGRMC1 homodimerization. Heme serves as cofactor.

It is found in the endoplasmic reticulum membrane. It localises to the microsome membrane. It carries out the reaction an organic molecule + reduced [NADPH--hemoprotein reductase] + O2 = an alcohol + oxidized [NADPH--hemoprotein reductase] + H2O + H(+). The catalysed reaction is 17beta-estradiol + reduced [NADPH--hemoprotein reductase] + O2 = 2-hydroxy-17beta-estradiol + oxidized [NADPH--hemoprotein reductase] + H2O + H(+). The enzyme catalyses 17beta-estradiol + reduced [NADPH--hemoprotein reductase] + O2 = 4-hydroxy-17beta-estradiol + oxidized [NADPH--hemoprotein reductase] + H2O + H(+). It catalyses the reaction estrone + reduced [NADPH--hemoprotein reductase] + O2 = 2-hydroxyestrone + oxidized [NADPH--hemoprotein reductase] + H2O + H(+). It carries out the reaction estrone + reduced [NADPH--hemoprotein reductase] + O2 = 4-hydroxyestrone + oxidized [NADPH--hemoprotein reductase] + H2O + H(+). The catalysed reaction is cholesterol + reduced [NADPH--hemoprotein reductase] + O2 = 25-hydroxycholesterol + oxidized [NADPH--hemoprotein reductase] + H2O + H(+). The enzyme catalyses all-trans-retinol + reduced [NADPH--hemoprotein reductase] + O2 = all-trans-retinal + oxidized [NADPH--hemoprotein reductase] + 2 H2O + H(+). It catalyses the reaction all-trans-retinal + reduced [NADPH--hemoprotein reductase] + O2 = all-trans-retinoate + oxidized [NADPH--hemoprotein reductase] + H2O + 2 H(+). It carries out the reaction (5Z,8Z,11Z,14Z)-eicosatetraenoate + reduced [NADPH--hemoprotein reductase] + O2 = (14R,15S)-epoxy-(5Z,8Z,11Z)-eicosatrienoate + oxidized [NADPH--hemoprotein reductase] + H2O + H(+). The catalysed reaction is (5Z,8Z,11Z,14Z)-eicosatetraenoate + reduced [NADPH--hemoprotein reductase] + O2 = (14S,15R)-epoxy-(5Z,8Z,11Z)-eicosatrienoate + oxidized [NADPH--hemoprotein reductase] + H2O + H(+). The enzyme catalyses (5Z,8Z,11Z,14Z,17Z)-eicosapentaenoate + reduced [NADPH--hemoprotein reductase] + O2 = (17R,18S)-epoxy-(5Z,8Z,11Z,14Z)-eicosatetraenoate + oxidized [NADPH--hemoprotein reductase] + H2O + H(+). It catalyses the reaction (4Z,7Z,10Z,13Z,16Z,19Z)-docosahexaenoate + reduced [NADPH--hemoprotein reductase] + O2 = (19R,20S)-epoxy-(4Z,7Z,10Z,13Z,16Z)-docosapentaenoate + oxidized [NADPH--hemoprotein reductase] + H2O + H(+). It carries out the reaction (5S)-hydroperoxy-(6E,8Z,11Z,14Z)-eicosatetraenoate = 5-oxo-(6E,8Z,11Z,14Z)-eicosatetraenoate + H2O. The catalysed reaction is (12S)-hydroperoxy-(5Z,8Z,10E,14Z)-eicosatetraenoate = 12-oxo-(5Z,8Z,10E,14Z)-eicosatetraenoate + H2O. The enzyme catalyses (15S)-hydroperoxy-(5Z,8Z,11Z,13E)-eicosatetraenoate = 15-oxo-(5Z,8Z,11Z,13E)-eicosatetraenoate + H2O. It catalyses the reaction (13S)-hydroperoxy-(9Z,11E)-octadecadienoate = 13-oxo-(9Z,11E)-octadecadienoate + H2O. It carries out the reaction (5Z,8Z,11Z,14Z)-eicosatetraenoate + reduced [NADPH--hemoprotein reductase] + O2 = 13-hydroxy-(5Z,8Z,11Z,14Z)-eicosatetraenoate + oxidized [NADPH--hemoprotein reductase] + H2O + H(+). The catalysed reaction is (5Z,8Z,11Z,14Z)-eicosatetraenoate + reduced [NADPH--hemoprotein reductase] + O2 = 19-hydroxy-(5Z,8Z,11Z,14Z)-eicosatetraenoate + oxidized [NADPH--hemoprotein reductase] + H2O + H(+). The enzyme catalyses (9Z,12Z)-octadecadienoate + reduced [NADPH--hemoprotein reductase] + O2 = 11-hydroxy-(9Z,12Z)-octadecadienoate + oxidized [NADPH--hemoprotein reductase] + H2O + H(+). Its pathway is cofactor metabolism; retinol metabolism. It functions in the pathway steroid metabolism; cholesterol metabolism. The protein operates within lipid metabolism; arachidonate metabolism. Functionally, a cytochrome P450 monooxygenase involved in the metabolism of various endogenous substrates, including fatty acids, steroid hormones and vitamins. Mechanistically, uses molecular oxygen inserting one oxygen atom into a substrate, and reducing the second into a water molecule, with two electrons provided by NADPH via cytochrome P450 reductase (NADPH--hemoprotein reductase). Catalyzes the hydroxylation of carbon-hydrogen bonds. Exhibits high catalytic activity for the formation of hydroxyestrogens from estrone (E1) and 17beta-estradiol (E2), namely 2-hydroxy E1 and E2. Metabolizes cholesterol toward 25-hydroxycholesterol, a physiological regulator of cellular cholesterol homeostasis. May act as a major enzyme for all-trans retinoic acid biosynthesis in the liver. Catalyzes two successive oxidative transformation of all-trans retinol to all-trans retinal and then to the active form all-trans retinoic acid. Primarily catalyzes stereoselective epoxidation of the last double bond of polyunsaturated fatty acids (PUFA), displaying a strong preference for the (R,S) stereoisomer. Catalyzes bisallylic hydroxylation and omega-1 hydroxylation of PUFA. May also participate in eicosanoids metabolism by converting hydroperoxide species into oxo metabolites (lipoxygenase-like reaction, NADPH-independent). Plays a role in the oxidative metabolism of xenobiotics. Catalyzes the N-hydroxylation of heterocyclic amines and the O-deethylation of phenacetin. Metabolizes caffeine via N3-demethylation. This chain is Cytochrome P450 1A2 (CYP1A2), found in Balaenoptera acutorostrata (Common minke whale).